A 476-amino-acid chain; its full sequence is Lactate utilization protein B (476 aa).

4Fe-4S ferredoxin-type domains follow at residues 304 to 334 (GTEF…GHSY) and 353 to 382 (YDDY…LHEL). Residues C313, C316, C319, C323, C366, C369, and C373 each contribute to the [4Fe-4S] cluster site. Positions 440–476 (KGPGPLKAWTESREFPAPSKERFRDWFQTRQKGGNPS) are disordered. The span at 449–466 (TESREFPAPSKERFRDWF) shows a compositional bias: basic and acidic residues. Polar residues predominate over residues 467–476 (QTRQKGGNPS).

This sequence belongs to the LutB/YkgF family.

Functionally, is involved in L-lactate degradation and allows cells to grow with lactate as the sole carbon source. Has probably a role as an electron transporter during oxidation of L-lactate. This Geobacillus kaustophilus (strain HTA426) protein is Lactate utilization protein B.